Reading from the N-terminus, the 226-residue chain is 2-C-methyl-D-erythritol 4-phosphate cytidylyltransferase (226 aa).

It belongs to the IspD/TarI cytidylyltransferase family. IspD subfamily.

The enzyme catalyses 2-C-methyl-D-erythritol 4-phosphate + CTP + H(+) = 4-CDP-2-C-methyl-D-erythritol + diphosphate. The protein operates within isoprenoid biosynthesis; isopentenyl diphosphate biosynthesis via DXP pathway; isopentenyl diphosphate from 1-deoxy-D-xylulose 5-phosphate: step 2/6. Catalyzes the formation of 4-diphosphocytidyl-2-C-methyl-D-erythritol from CTP and 2-C-methyl-D-erythritol 4-phosphate (MEP). The chain is 2-C-methyl-D-erythritol 4-phosphate cytidylyltransferase from Clostridium beijerinckii (strain ATCC 51743 / NCIMB 8052) (Clostridium acetobutylicum).